The following is a 343-amino-acid chain: Anthranilate phosphoribosyltransferase (343 aa).

5-phospho-alpha-D-ribose 1-diphosphate-binding positions include G84, 87 to 88 (GD), T92, 94 to 97 (NIST), 112 to 120 (KHGNRSASS), and S124. G84 lines the anthranilate pocket. Residue S96 coordinates Mg(2+). N115 is a binding site for anthranilate. R170 is a binding site for anthranilate. Residues D229 and E230 each coordinate Mg(2+).

This sequence belongs to the anthranilate phosphoribosyltransferase family. As to quaternary structure, homodimer. The cofactor is Mg(2+).

It carries out the reaction N-(5-phospho-beta-D-ribosyl)anthranilate + diphosphate = 5-phospho-alpha-D-ribose 1-diphosphate + anthranilate. Its pathway is amino-acid biosynthesis; L-tryptophan biosynthesis; L-tryptophan from chorismate: step 2/5. Catalyzes the transfer of the phosphoribosyl group of 5-phosphorylribose-1-pyrophosphate (PRPP) to anthranilate to yield N-(5'-phosphoribosyl)-anthranilate (PRA). The polypeptide is Anthranilate phosphoribosyltransferase (Bordetella avium (strain 197N)).